Reading from the N-terminus, the 72-residue chain is Translation initiation factor IF-1 (72 aa).

An S1-like domain is found at 1–72 (MSKEEAIEVE…SRGRITYRAK (72 aa)).

It belongs to the IF-1 family. Component of the 30S ribosomal translation pre-initiation complex which assembles on the 30S ribosome in the order IF-2 and IF-3, IF-1 and N-formylmethionyl-tRNA(fMet); mRNA recruitment can occur at any time during PIC assembly.

Its subcellular location is the cytoplasm. In terms of biological role, one of the essential components for the initiation of protein synthesis. Stabilizes the binding of IF-2 and IF-3 on the 30S subunit to which N-formylmethionyl-tRNA(fMet) subsequently binds. Helps modulate mRNA selection, yielding the 30S pre-initiation complex (PIC). Upon addition of the 50S ribosomal subunit IF-1, IF-2 and IF-3 are released leaving the mature 70S translation initiation complex. This chain is Translation initiation factor IF-1, found in Geobacter metallireducens (strain ATCC 53774 / DSM 7210 / GS-15).